Consider the following 328-residue polypeptide: MPDRGGENGASCSVGRWSAEEARAIYNLPFNDLLFRAHGLHRENFDPNRIQLSKLLNIKTGGCPEDCGYCSQSASAENGLKASKLMEIETVLEEARKAKAAGATRYCMGAAWRSPKDRDMPALTHMIESVKAMGLETCMTLGMLDSDKAEKLADAGLDYYNHNIDTSERFYPAVITTRSFEDRLDTLANVRNAGIKVCSGGILGLGEEAEDRIDMLVTLANLPEPPESVPINMLIPMPGTRLAKAAPVDPLEFVRVVALARILMPKSHVRLTAGRTAMSDEMQALCFFAGANSLFMGDTLLTAANPGDDRDSSLLRRLGIQAETEQPA.

In terms of domain architecture, Radical SAM core spans 48–275 (NRIQLSKLLN…KSHVRLTAGR (228 aa)). Residues C63, C67, and C70 each contribute to the [4Fe-4S] cluster site. C107, C138, C198, and R270 together coordinate [2Fe-2S] cluster.

The protein belongs to the radical SAM superfamily. Biotin synthase family. Homodimer. It depends on [4Fe-4S] cluster as a cofactor. [2Fe-2S] cluster is required as a cofactor.

It catalyses the reaction (4R,5S)-dethiobiotin + (sulfur carrier)-SH + 2 reduced [2Fe-2S]-[ferredoxin] + 2 S-adenosyl-L-methionine = (sulfur carrier)-H + biotin + 2 5'-deoxyadenosine + 2 L-methionine + 2 oxidized [2Fe-2S]-[ferredoxin]. It participates in cofactor biosynthesis; biotin biosynthesis; biotin from 7,8-diaminononanoate: step 2/2. In terms of biological role, catalyzes the conversion of dethiobiotin (DTB) to biotin by the insertion of a sulfur atom into dethiobiotin via a radical-based mechanism. The protein is Biotin synthase of Brucella abortus (strain S19).